The sequence spans 128 residues: MAGNLLSGAGRRLWDWVPLACRSFSLGVPRLIGIRLTLPPPKVVDRWNEKRAMFGVYDNIGILGNFEKHPKELIRGPIWLRGWKGNELQRCIRKRKMVGSRMFADDLHNLNKRIRYLYKHFNRHGKFR.

A mitochondrion-targeting transit peptide spans methionine 1–leucine 31.

The protein belongs to the mitochondrion-specific ribosomal protein mL51 family. Component of the mitochondrial large ribosomal subunit (mt-LSU). Mature mammalian 55S mitochondrial ribosomes consist of a small (28S) and a large (39S) subunit. The 28S small subunit contains a 12S ribosomal RNA (12S mt-rRNA) and 30 different proteins. The 39S large subunit contains a 16S rRNA (16S mt-rRNA), a copy of mitochondrial valine transfer RNA (mt-tRNA(Val)), which plays an integral structural role, and 52 different proteins. Interacts with OXA1L.

Its subcellular location is the mitochondrion. This chain is Large ribosomal subunit protein mL51 (MRPL51), found in Homo sapiens (Human).